A 69-amino-acid chain; its full sequence is MKNLLICIIKMYRKYISPLKRPSCRFYPTCSQYSLEAIEKYGALKGTLISIKRILKCHPFNEGGYDPVK.

The protein belongs to the UPF0161 family.

It localises to the cell membrane. Could be involved in insertion of integral membrane proteins into the membrane. The chain is Putative membrane protein insertion efficiency factor from Clostridium botulinum (strain Kyoto / Type A2).